Consider the following 490-residue polypeptide: Cyclin-T1-3 (490 aa).

Disordered regions lie at residues 275 to 391 (RVAP…GDVA) and 414 to 490 (AAED…RLRS). Polar residues-rich tracts occupy residues 282-298 (QGND…NQRA) and 352-365 (TANS…SSTM). 2 stretches are compositionally biased toward basic and acidic residues: residues 367 to 391 (AMKK…GDVA) and 457 to 490 (QEYR…RLRS).

This sequence belongs to the cyclin family. Cyclin T subfamily.

The chain is Cyclin-T1-3 (CYCT1-3) from Oryza sativa subsp. japonica (Rice).